The primary structure comprises 100 residues: MATIVDPRDIILAPVISEKSYALLDDNVYIFVVHPDSNKTQIKIAIEKIFAVKVASVNTANRQGKRKRTRTGYGKRKSTKRAIVTLAPGSKPIDLFGAPA.

It belongs to the universal ribosomal protein uL23 family. In terms of assembly, part of the 50S ribosomal subunit. Contacts protein L29, and trigger factor when it is bound to the ribosome.

One of the early assembly proteins it binds 23S rRNA. One of the proteins that surrounds the polypeptide exit tunnel on the outside of the ribosome. Forms the main docking site for trigger factor binding to the ribosome. This Mycobacterium ulcerans (strain Agy99) protein is Large ribosomal subunit protein uL23.